A 180-amino-acid chain; its full sequence is Peptidyl-tRNA hydrolase (180 aa).

Tyrosine 15 is a binding site for tRNA. The active-site Proton acceptor is histidine 20. TRNA-binding residues include phenylalanine 67, asparagine 69, and asparagine 115.

Belongs to the PTH family. In terms of assembly, monomer.

The protein resides in the cytoplasm. It catalyses the reaction an N-acyl-L-alpha-aminoacyl-tRNA + H2O = an N-acyl-L-amino acid + a tRNA + H(+). Its function is as follows. Hydrolyzes ribosome-free peptidyl-tRNAs (with 1 or more amino acids incorporated), which drop off the ribosome during protein synthesis, or as a result of ribosome stalling. Functionally, catalyzes the release of premature peptidyl moieties from peptidyl-tRNA molecules trapped in stalled 50S ribosomal subunits, and thus maintains levels of free tRNAs and 50S ribosomes. The protein is Peptidyl-tRNA hydrolase of Chlamydia pneumoniae (Chlamydophila pneumoniae).